A 150-amino-acid chain; its full sequence is UPF0756 membrane protein ECA1265 (150 aa).

4 helical membrane passes run 1–21, 51–71, 82–102, and 127–147; these read MAYI…GIIS, YGLS…IASG, FLHW…WLGG, and ALFR…SLLI.

The protein belongs to the UPF0756 family.

The protein localises to the cell membrane. The sequence is that of UPF0756 membrane protein ECA1265 from Pectobacterium atrosepticum (strain SCRI 1043 / ATCC BAA-672) (Erwinia carotovora subsp. atroseptica).